Reading from the N-terminus, the 469-residue chain is Adenosylhomocysteinase (469 aa).

Substrate-binding residues include Thr-63, Asp-139, and Glu-164. 165–167 is an NAD(+) binding site; sequence TTT. Substrate-binding residues include Lys-194 and Asp-198. NAD(+) is bound by residues Asn-199, 228–233, Glu-251, Asn-300, 321–323, and Asn-375; these read GYGDVG and IGH.

It belongs to the adenosylhomocysteinase family. Requires NAD(+) as cofactor.

The protein resides in the cytoplasm. The catalysed reaction is S-adenosyl-L-homocysteine + H2O = L-homocysteine + adenosine. It participates in amino-acid biosynthesis; L-homocysteine biosynthesis; L-homocysteine from S-adenosyl-L-homocysteine: step 1/1. Functionally, may play a key role in the regulation of the intracellular concentration of adenosylhomocysteine. The polypeptide is Adenosylhomocysteinase (Pseudomonas putida (strain W619)).